We begin with the raw amino-acid sequence, 513 residues long: MTAAENPFVSDTSSLQSQLKEKEKELLAAKAEVEALRTNEELKDRVFKELRENVRKLEEKLGATENQVDQKELERKKLEEEKEDALAAQDAAEEALRRVYTHQQDDDSLPLESIIAPLESQIKIHKHEISALQEDKKALERLTKSKESALLEAERILRSALERALIVEEVQNHNFELRRQIEICQDENKFLEKINRQKVLEIEKLSQSIVELEEAILAGGTAANAVRDYRRQISQLNDEKRTLERELARVKVSASRVALAVANEWKDENDRVMPVKQWLEERRILHGEMQKLKDKLAVSERTAKAESQLKERLKLRLKTIEDGLKGPNTFFVSPTTKTEKSGKILGFLTSGGGSKKRSSSQLRGSVTGRIHAMNQPIDRVGESDEMENSKITANGLTDQHEEDSERKTEEDGNVYSEDMVSGFLYDRLQKEVIALRKLCESKEGTINAKNEEIKMLLKKVDALTKAIEVETKKAKREAAAREKENALAMLNEESKLCRKAKLPRSRIPNPRCQ.

4 disordered regions span residues 1-20 (MTAA…SQLK), 60-81 (KLGA…LEEE), 347-367 (FLTS…GSVT), and 393-413 (ANGL…EDGN). Residues 9–18 (VSDTSSLQSQ) are compositionally biased toward polar residues. Positions 10–322 (SDTSSLQSQL…LKLRLKTIED (313 aa)) form a coiled coil. Positions 60 to 80 (KLGATENQVDQKELERKKLEE) are enriched in basic and acidic residues. Residues 190–400 (FLEKINRQKV…ITANGLTDQH (211 aa)) form a required for targeting to microtubules region. A coiled-coil region spans residues 426–501 (DRLQKEVIAL…EESKLCRKAK (76 aa)).

The protein belongs to the MAP70 family. Interacts with MAP70.1 and itself.

The protein localises to the cytoplasm. It is found in the cytoskeleton. Its function is as follows. Plant-specific protein that interact with microtubules and regulates microtubule dynamics. May play a role in anisotropic cell expansion and organ growth. In association with MAP70.1, is essential for the normal banding pattern of secondary cell wall and for the proper development of xylem tracheary elements and wood formation. This is Microtubule-associated protein 70-5 (MAP70.5) from Arabidopsis thaliana (Mouse-ear cress).